The following is a 185-amino-acid chain: Peptidyl-tRNA hydrolase (185 aa).

A tRNA-binding site is contributed by Tyr14. Residue His19 is the Proton acceptor of the active site. Positions 65, 67, and 113 each coordinate tRNA.

The protein belongs to the PTH family. In terms of assembly, monomer.

The protein localises to the cytoplasm. It catalyses the reaction an N-acyl-L-alpha-aminoacyl-tRNA + H2O = an N-acyl-L-amino acid + a tRNA + H(+). Functionally, hydrolyzes ribosome-free peptidyl-tRNAs (with 1 or more amino acids incorporated), which drop off the ribosome during protein synthesis, or as a result of ribosome stalling. In terms of biological role, catalyzes the release of premature peptidyl moieties from peptidyl-tRNA molecules trapped in stalled 50S ribosomal subunits, and thus maintains levels of free tRNAs and 50S ribosomes. In Rickettsia rickettsii (strain Iowa), this protein is Peptidyl-tRNA hydrolase.